Here is a 207-residue protein sequence, read N- to C-terminus: Outer-membrane lipoprotein LolB (207 aa).

Positions 1–21 (MPLPDFRFIRLLPLAALVLTA) are cleaved as a signal peptide. The N-palmitoyl cysteine moiety is linked to residue Cys22. A lipid anchor (S-diacylglycerol cysteine) is attached at Cys22.

The protein belongs to the LolB family. In terms of assembly, monomer.

The protein localises to the cell outer membrane. In terms of biological role, plays a critical role in the incorporation of lipoproteins in the outer membrane after they are released by the LolA protein. The protein is Outer-membrane lipoprotein LolB of Escherichia coli O6:K15:H31 (strain 536 / UPEC).